A 155-amino-acid chain; its full sequence is 3-hydroxyacyl-[acyl-carrier-protein] dehydratase FabZ (155 aa).

Histidine 57 is a catalytic residue.

The protein belongs to the thioester dehydratase family. FabZ subfamily.

It localises to the cytoplasm. It catalyses the reaction a (3R)-hydroxyacyl-[ACP] = a (2E)-enoyl-[ACP] + H2O. Its function is as follows. Involved in unsaturated fatty acids biosynthesis. Catalyzes the dehydration of short chain beta-hydroxyacyl-ACPs and long chain saturated and unsaturated beta-hydroxyacyl-ACPs. This Cereibacter sphaeroides (strain ATCC 17025 / ATH 2.4.3) (Rhodobacter sphaeroides) protein is 3-hydroxyacyl-[acyl-carrier-protein] dehydratase FabZ.